The primary structure comprises 942 residues: Valine--tRNA ligase (942 aa).

The 'HIGH' region motif lies at 43–53 (PNVTGTLHMGH). The short motif at 551–555 (KMSKS) is the 'KMSKS' region element. Position 554 (K554) interacts with ATP. Residues 876–942 (EGLVDLDAER…AGLREQRAKL (67 aa)) are a coiled coil.

It belongs to the class-I aminoacyl-tRNA synthetase family. ValS type 1 subfamily. In terms of assembly, monomer.

Its subcellular location is the cytoplasm. The enzyme catalyses tRNA(Val) + L-valine + ATP = L-valyl-tRNA(Val) + AMP + diphosphate. Its function is as follows. Catalyzes the attachment of valine to tRNA(Val). As ValRS can inadvertently accommodate and process structurally similar amino acids such as threonine, to avoid such errors, it has a 'posttransfer' editing activity that hydrolyzes mischarged Thr-tRNA(Val) in a tRNA-dependent manner. The chain is Valine--tRNA ligase from Stenotrophomonas maltophilia (strain R551-3).